A 630-amino-acid chain; its full sequence is MGACNITVLLLVIMLWLPHGLSMGNSCSASVLEARRFFELENEQLRRRFHEEFLSGYNYNTNVTEANRQAMIEVYARNAELNKRLAQQIKSSDYVQSEDADIRRQAEHLSKLGASALNADDYLALQNAISSMQTNYATATVCSYTNRSDCSLTLEPHIQERLSHSRDPAELAWYWREWHDKSGTPMRQNFAEYVRLTRKASQLNGHRSYADYWVQFYEDPDFERQLDATFKQLLPFYRQLHGYVRFRLRQHYGPDVMPAEGNIPISLLGNMWGQSWNELLDLFTPYPEKPFVDVKAEMEKQGYTVQKLFELGDQFFQSLGMRALPPSFWNLSVLTRPDDRHVVCHASAWDFYQDSDVRIKMCTEVDSHYFYVVHHELGHIQYYLQYEQQPAVYRGAPNPGFHEAVGDVIALSVMSAKHLKAIGLIENGRLDEKSRINQLFKQALSKIVFLPFGYAVDKYRYAVFRNELDESQWNCGFWQMRSEFGGVEPPVFRTEKDFDPPAKYHIDADVEYLRYFAAHIFQFQFHKALCRKAGQYAPNNSRLTLDNCDIFGSKAAGRSLSQFLSKGNSRHWKEVLEEFTGETEMDPAALLEYFEPLYQWLKQENSRLGVPLGWGPTDKIPSDCCGTFST.

An N-terminal signal peptide occupies residues 1–22 (MGACNITVLLLVIMLWLPHGLS). The Peptidase M2 domain maps to 28 to 615 (SASVLEARRF…SRLGVPLGWG (588 aa)). 2 disulfide bridges follow: C142–C150 and C344–C362. H375 is a binding site for Zn(2+). E376 serves as the catalytic Proton acceptor. Zn(2+) contacts are provided by H379 and E403. The Proton donor role is filled by H505. C530 and C548 are joined by a disulfide.

This sequence belongs to the peptidase M2 family. Requires Zn(2+) as cofactor. Glycosylated.

Its subcellular location is the secreted. It is found in the extracellular space. It catalyses the reaction Release of a C-terminal dipeptide, oligopeptide-|-Xaa-Yaa, when Xaa is not Pro, and Yaa is neither Asp nor Glu. Thus, conversion of angiotensin I to angiotensin II, with increase in vasoconstrictor activity, but no action on angiotensin II.. Inhibited by captopril, lisinopril, trandolaprilat, fosinoprilat and enalaprilat. Functionally, may be involved in the specific maturation or degradation of a number of bioactive peptides. May have a role in the specification of heart progenitors. The sequence is that of Angiotensin-converting enzyme-related protein (Acer) from Drosophila melanogaster (Fruit fly).